The sequence spans 351 residues: Dihydroorotate dehydrogenase (quinone) (351 aa).

FMN is bound by residues Ala-61 to Lys-65 and Thr-85. Residue Lys-65 participates in substrate binding. A substrate-binding site is contributed by Asn-110–Phe-114. FMN contacts are provided by Asn-139 and Asn-172. Asn-172 lines the substrate pocket. Ser-175 functions as the Nucleophile in the catalytic mechanism. Asn-177 is a substrate binding site. The FMN site is built by Lys-217 and Thr-245. Asn-246 to Thr-247 is a binding site for substrate. FMN contacts are provided by residues Gly-268, Gly-297, and Tyr-318 to Thr-319.

The protein belongs to the dihydroorotate dehydrogenase family. Type 2 subfamily. As to quaternary structure, monomer. Requires FMN as cofactor.

The protein localises to the cell membrane. The enzyme catalyses (S)-dihydroorotate + a quinone = orotate + a quinol. It functions in the pathway pyrimidine metabolism; UMP biosynthesis via de novo pathway; orotate from (S)-dihydroorotate (quinone route): step 1/1. In terms of biological role, catalyzes the conversion of dihydroorotate to orotate with quinone as electron acceptor. The protein is Dihydroorotate dehydrogenase (quinone) of Xylella fastidiosa (strain M12).